We begin with the raw amino-acid sequence, 171 residues long: Cytochrome c oxidase subunit 5b-2, mitochondrial (171 aa).

Residues 1-54 (MWRRIVSSHLKSISAVGSCAAPSCRHAVVESTHLSLSTRASSIPAYSSIFSRLI) constitute a mitochondrion transit peptide. Zn(2+) is bound by residues C121, C145, and C148.

This sequence belongs to the cytochrome c oxidase subunit 5B (TC 3.D.4.11) family.

It localises to the mitochondrion inner membrane. In terms of biological role, this protein is one of the nuclear-coded polypeptide chains of cytochrome c oxidase, the terminal oxidase in mitochondrial electron transport. The protein is Cytochrome c oxidase subunit 5b-2, mitochondrial (COX5B-2) of Arabidopsis thaliana (Mouse-ear cress).